The following is a 215-amino-acid chain: Late embryogenesis abundant protein 14 (215 aa).

Disordered stretches follow at residues 1-129 and 190-215; these read MASQ…GQTG and SGDN…SDYQ. Composition is skewed to basic and acidic residues over residues 13–24, 32–41, 54–81, and 88–111; these read GETKARAEEKTG, EKAREAKDTA, GAKE…KDAA, and AMDK…DRAA. Positions 192 to 215 are enriched in polar residues; the sequence is DNKNNAAAGKDTSTYKPGTGSDYQ.

Belongs to the LEA type 4 family. In terms of tissue distribution, expressed in the shoot apex and leaves. Expressed in dry seeds. Expressed in roots and leaves.

The protein localises to the nucleus. This chain is Late embryogenesis abundant protein 14, found in Oryza sativa subsp. japonica (Rice).